Here is a 164-residue protein sequence, read N- to C-terminus: Interferon gamma (164 aa).

Positions 1-19 (MTCQTYNLFVLSVIMIYYG) are cleaved as a signal peptide. 2 N-linked (GlcNAc...) asparagine glycosylation sites follow: Asn-42 and Asn-61.

It belongs to the type II (or gamma) interferon family. In terms of assembly, homodimer.

The protein resides in the secreted. Its function is as follows. Produced by lymphocytes activated by specific antigens or mitogens. IFN-gamma, in addition to having antiviral activity, has important immunoregulatory functions. It is a potent activator of macrophages, it has antiproliferative effects on transformed cells and it can potentiate the antiviral and antitumor effects of the type I interferons. This is Interferon gamma (IFNG) from Numida meleagris (Helmeted guineafowl).